Consider the following 330-residue polypeptide: AA9 family lytic polysaccharide monooxygenase E (330 aa).

The first 20 residues, 1-20 (MRSTLVTGLIAGLLSQQAAA), serve as a signal peptide directing secretion. Residues His21 and His99 each contribute to the Cu(2+) site. Cys58 and Cys193 are oxidised to a cystine. O2-binding residues include His179 and Gln188. Tyr190 is a Cu(2+) binding site. The CBM1 domain maps to 293–330 (CSVAKYQQCGGTGYTGCTSCASGSTCSAVSPPYYSQCV).

Belongs to the polysaccharide monooxygenase AA9 family. Cu(2+) serves as cofactor.

It is found in the secreted. It catalyses the reaction [(1-&gt;4)-beta-D-glucosyl]n+m + reduced acceptor + O2 = 4-dehydro-beta-D-glucosyl-[(1-&gt;4)-beta-D-glucosyl]n-1 + [(1-&gt;4)-beta-D-glucosyl]m + acceptor + H2O.. Lytic polysaccharide monooxygenase (LPMO) that depolymerizes crystalline and amorphous polysaccharides via the oxidation of scissile alpha- or beta-(1-4)-glycosidic bonds, yielding exclusively C1 oxidation products. Catalysis by LPMOs requires the reduction of the active-site copper from Cu(II) to Cu(I) by a reducing agent and H(2)O(2) or O(2) as a cosubstrate. This is AA9 family lytic polysaccharide monooxygenase E (gh61-5) from Neurospora crassa (strain ATCC 24698 / 74-OR23-1A / CBS 708.71 / DSM 1257 / FGSC 987).